We begin with the raw amino-acid sequence, 225 residues long: Ribose-5-phosphate isomerase A (225 aa).

Substrate contacts are provided by residues 27-30 (SGST), 82-85 (DGAD), and 95-98 (KGGG). Glu104 functions as the Proton acceptor in the catalytic mechanism. Lys122 provides a ligand contact to substrate.

Belongs to the ribose 5-phosphate isomerase family. Homodimer.

It catalyses the reaction aldehydo-D-ribose 5-phosphate = D-ribulose 5-phosphate. It functions in the pathway carbohydrate degradation; pentose phosphate pathway; D-ribose 5-phosphate from D-ribulose 5-phosphate (non-oxidative stage): step 1/1. Its function is as follows. Catalyzes the reversible conversion of ribose-5-phosphate to ribulose 5-phosphate. The protein is Ribose-5-phosphate isomerase A of Archaeoglobus fulgidus (strain ATCC 49558 / DSM 4304 / JCM 9628 / NBRC 100126 / VC-16).